Here is a 427-residue protein sequence, read N- to C-terminus: MLDTVTLSPDIDALMNDIGRKAKAAARPLGFASTEAKNRALNAMADAILANSAHILAENAKDLKDVEGSEMLASFIDRLTLSDKRIAEMAEGIRAIAALADPVGEVIAAWDRPNGLKIERVRTPLGVIGVIFESRPNVTADAGALCLKAGNAVILRCGSDSRRSSQAIHACMVDGLKAARLPEHAIQLVPVTDRAAVGAMLRGLDGSIDVIVPRGGKSLVARVQSEARVPVFAHLEGLCHIYVDASADIEMAKKIVVNAKMRRTGICGAAETLLVDGAAIGTHLTPLLDVLTEAGCEIRGSAAVLKVAPGIKPATEEDWTTEYLDAIISVAVVDGISGAIAHIQTYSSNHTEAVIAEDPAVVERFFTEVDSAILLHNASTQFADGGEFGMGAEIGIATGKMHARGPVGVEQLTSFKYRVRGAGQTRP.

The protein belongs to the gamma-glutamyl phosphate reductase family.

The protein localises to the cytoplasm. The catalysed reaction is L-glutamate 5-semialdehyde + phosphate + NADP(+) = L-glutamyl 5-phosphate + NADPH + H(+). The protein operates within amino-acid biosynthesis; L-proline biosynthesis; L-glutamate 5-semialdehyde from L-glutamate: step 2/2. In terms of biological role, catalyzes the NADPH-dependent reduction of L-glutamate 5-phosphate into L-glutamate 5-semialdehyde and phosphate. The product spontaneously undergoes cyclization to form 1-pyrroline-5-carboxylate. This Rhizobium etli (strain CIAT 652) protein is Gamma-glutamyl phosphate reductase.